The chain runs to 384 residues: F-box/kelch-repeat protein At1g64840 (384 aa).

The region spanning 3-51 is the F-box domain; the sequence is PNWSQLPEELLNLISKNLDNCFDVVHARSICRSWRSAFPFPSSLSTLSY. 2 Kelch repeats span residues 87-137 and 259-309; these read PEYF…PLGF and NPFP…CCSA.

The protein is F-box/kelch-repeat protein At1g64840 of Arabidopsis thaliana (Mouse-ear cress).